The sequence spans 356 residues: Nitrilase, arylacetone-specific (356 aa).

Positions 7–280 (VRAAAVQAAS…EGLIIADLNM (274 aa)) constitute a CN hydrolase domain. E47 functions as the Proton acceptor in the catalytic mechanism. K129 serves as the catalytic Proton donor. The active-site Nucleophile is the C163. A disordered region spans residues 324–356 (QEEAPEPHVQSTAAPVAVSQTQDSDTLLVQEPS). Residues 332 to 356 (VQSTAAPVAVSQTQDSDTLLVQEPS) are compositionally biased toward polar residues.

This sequence belongs to the carbon-nitrogen hydrolase superfamily. Nitrilase family. As to quaternary structure, homohexamer.

It catalyses the reaction a nitrile + 2 H2O = a carboxylate + NH4(+). Its function is as follows. Nitrilase that acts mostly on arylacetonitriles. This Alcaligenes faecalis protein is Nitrilase, arylacetone-specific.